A 150-amino-acid chain; its full sequence is Single-stranded DNA-binding protein 1 (150 aa).

The SSB domain maps to M1–E104. Polar residues predominate over residues L103–N120. The tract at residues L103–F150 is disordered. Residues K121–A138 are compositionally biased toward low complexity. The Important for interaction with partner proteins signature appears at D145–F150.

In terms of assembly, homotetramer.

Plays an important role in DNA replication, recombination and repair. Binds to ssDNA and to an array of partner proteins to recruit them to their sites of action during DNA metabolism. The chain is Single-stranded DNA-binding protein 1 (ssb1) from Lactococcus lactis subsp. lactis (strain IL1403) (Streptococcus lactis).